The primary structure comprises 244 residues: MTGSGSPCGACKFLRRRCVKGCVFAPYFCHEQGASHFAAIHQVFGASNASKLLSHLPMEDRREAATTIYYEAQARRQDPIYGCVSHIFSLQQQVVNLQTQLEILKQQATQSMMAIDSPSIENPNYYQDTKPQYLQESHDLHHHHLTTSNCQTEQNSDLKNIMTSCYHQMEIETTPFTGAGGDTMAGSYYYNSSSGCSEELKSVSTNGEFSKYSELDQHLTNTFNQYRHGGNNLISESLGYITYS.

The LOB domain occupies 6 to 108 (SPCGACKFLR…TQLEILKQQA (103 aa)).

It belongs to the LOB domain-containing protein family. In terms of tissue distribution, expressed in roots, stems, leaves and flowers.

This Arabidopsis thaliana (Mouse-ear cress) protein is LOB domain-containing protein 17 (LBD17).